A 264-amino-acid chain; its full sequence is Stress response regulator protein 1 (264 aa).

Residues 50-74 (IYSDCDNNKNNNDDDDDDDDYNKDT) form a disordered region. Positions 62–74 (DDDDDDDDYNKDT) are enriched in acidic residues. Positions 138-256 (RFLIVDDNII…LDLIGGSIDD (119 aa)) constitute a Response regulatory domain. 4-aspartylphosphate is present on aspartate 189.

Functionally, required for stress adaptation, morphogenesis and virulence. The sequence is that of Stress response regulator protein 1 (SRR1) from Candida tropicalis (strain ATCC MYA-3404 / T1) (Yeast).